A 177-amino-acid chain; its full sequence is MLGCGIPALGLLLLLQGSADGNGIQGFFYPWSCEGDIWDRESCGGQAAIDSPNLCLRLRCCYRNGVCYHQRPDENVRRKHMWALVWTCSGLLLLSCSICLFWWAKRRDVLHMPGFLAGPCDMSKSVSLLSKHRGTKKTPSTGSVPVALSKESRDVEGGTEGEGTEEGEETEGEEEED.

A signal peptide spans 1–21 (MLGCGIPALGLLLLLQGSADG). Topologically, residues 22-81 (NGIQGFFYPWSCEGDIWDRESCGGQAAIDSPNLCLRLRCCYRNGVCYHQRPDENVRRKHM) are extracellular. Residues 31–71 (WSCEGDIWDRESCGGQAAIDSPNLCLRLRCCYRNGVCYHQR) enclose the P-type domain. Disulfide bonds link C33-C61, C43-C60, and C55-C67. Residues 82 to 102 (WALVWTCSGLLLLSCSICLFW) form a helical membrane-spanning segment. The Cytoplasmic portion of the chain corresponds to 103-177 (WAKRRDVLHM…EETEGEEEED (75 aa)). The tract at residues 131 to 177 (KHRGTKKTPSTGSVPVALSKESRDVEGGTEGEGTEEGEETEGEEEED) is disordered. Residues 157 to 177 (GGTEGEGTEEGEETEGEEEED) show a composition bias toward acidic residues.

It is found in the membrane. The sequence is that of Transmembrane protein 190 (TMEM190) from Homo sapiens (Human).